The chain runs to 296 residues: NAD kinase (296 aa).

Aspartate 72 (proton acceptor) is an active-site residue. Residues 72-73 (DG), 146-147 (ND), arginine 157, arginine 174, aspartate 176, 187-192 (TAYALS), and glutamine 247 contribute to the NAD(+) site.

The protein belongs to the NAD kinase family. Requires a divalent metal cation as cofactor.

It localises to the cytoplasm. It carries out the reaction NAD(+) + ATP = ADP + NADP(+) + H(+). Functionally, involved in the regulation of the intracellular balance of NAD and NADP, and is a key enzyme in the biosynthesis of NADP. Catalyzes specifically the phosphorylation on 2'-hydroxyl of the adenosine moiety of NAD to yield NADP. The protein is NAD kinase of Hahella chejuensis (strain KCTC 2396).